Here is a 506-residue protein sequence, read N- to C-terminus: MATDWLGSIVSINCGESLGVYQGRVSAVDQVSQTISLTRPFHNGVKCLVPEVTFRAGDITELKILEIPGPGDSRQCGDLQQADTGIPGVGCQVGPSQNGTGKMLKKPFSSSAPQNIPRRTDMKNQDIIISPQQQCSKSYMDRHMETLSQSKGFRRRHNSWSSSSRHPNQVTPKKSGLKNGQMKSKDDECFGDDIDEIPDTDFDFEGNLALFDKAAVFEEIETYERRSGTRSRGTPNEKPARYRHDENILESEPIVYRRIVVPQNANKEFCTDSGLVVPSVSYELHKKLLSVAEKHGLTLERRLEMTGVCASQMALSLLGGPNRLNPKNVHQRPTVALLCGPHVKGAQGISCGRHLSNHDVHVILFLPNFVKMLESITNELNLFSSTQGQQVSSVKDLPDTPVDLVINCLDCHENAFLRDQPWYKAVVDWANQNRAPVLSIDPPISEMEQGIDAKWSLALGLPLPLGERAGRVYLCDIGIPQKVFQEVGINYHSPFGCKFVIPLHST.

One can recognise a Sm domain in the interval 1 to 68 (MATDWLGSIV…ITELKILEIP (68 aa)). The tract at residues 1–79 (MATDWLGSIV…PGDSRQCGDL (79 aa)) is required for P-body targeting and interaction with DCP1A. Disordered regions lie at residues 99–118 (GTGKMLKKPFSSSAPQNIPR) and 149–188 (QSKGFRRRHNSWSSSSRHPNQVTPKKSGLKNGQMKSKDDE). Residues 189–294 (CFGDDIDEIP…HKKLLSVAEK (106 aa)) are required for interaction with DDX6. The DFDF domain occupies 190 to 226 (FGDDIDEIPDTDFDFEGNLALFDKAAVFEEIETYERR). One can recognise a YjeF N-terminal domain in the interval 281–485 (SYELHKKLLS…DIGIPQKVFQ (205 aa)).

The protein belongs to the EDC3 family.

The protein localises to the cytoplasm. The protein resides in the P-body. Binds single-stranded RNA. Involved in the process of mRNA degradation and in the positive regulation of mRNA decapping. The protein is Enhancer of mRNA-decapping protein 3 (EDC3) of Gallus gallus (Chicken).